The sequence spans 131 residues: Global transcriptional regulator Spx 2 (131 aa).

C10 and C13 form a disulfide bridge.

This sequence belongs to the ArsC family. Spx subfamily. Interacts with the C-terminal domain of the alpha subunit of the RNAP.

It localises to the cytoplasm. Global transcriptional regulator that plays a key role in stress response and exerts either positive or negative regulation of genes. Acts by interacting with the C-terminal domain of the alpha subunit of the RNA polymerase (RNAP). This interaction can enhance binding of RNAP to the promoter region of target genes and stimulate their transcription, or block interaction of RNAP with activator. The chain is Global transcriptional regulator Spx 2 from Bacillus anthracis.